We begin with the raw amino-acid sequence, 581 residues long: Pectinesterase 3 (581 aa).

Positions Met1–Arg55 are cleaved as a signal peptide. N-linked (GlcNAc...) asparagine glycans are attached at residues Asn101, Asn156, Asn200, Asn217, and Asn268. Residues Thr348 and Gln378 each contribute to the substrate site. Catalysis depends on Asp401, which acts as the Proton donor. An intrachain disulfide couples Cys415 to Cys435. Asp422 serves as the catalytic Nucleophile. Asn477 carries an N-linked (GlcNAc...) asparagine glycan. The substrate site is built by Arg486 and Trp488.

The protein in the N-terminal section; belongs to the PMEI family. In the C-terminal section; belongs to the pectinesterase family.

It is found in the secreted. It localises to the cell wall. The enzyme catalyses [(1-&gt;4)-alpha-D-galacturonosyl methyl ester](n) + n H2O = [(1-&gt;4)-alpha-D-galacturonosyl](n) + n methanol + n H(+). The protein operates within glycan metabolism; pectin degradation; 2-dehydro-3-deoxy-D-gluconate from pectin: step 1/5. May have roles in the deposition of pectin in developing tissues and in the wall loosening and cell separation that occurs in cell expansion, fruit ripening and abscission. The polypeptide is Pectinesterase 3 (MPE3) (Phaseolus vulgaris (Kidney bean)).